A 219-amino-acid polypeptide reads, in one-letter code: 7-cyano-7-deazaguanine synthase (219 aa).

10-20 (FSGGQDSTTCL) serves as a coordination point for ATP. C188, C196, C199, and C202 together coordinate Zn(2+).

Belongs to the QueC family. The cofactor is Zn(2+).

The catalysed reaction is 7-carboxy-7-deazaguanine + NH4(+) + ATP = 7-cyano-7-deazaguanine + ADP + phosphate + H2O + H(+). Its pathway is purine metabolism; 7-cyano-7-deazaguanine biosynthesis. Functionally, catalyzes the ATP-dependent conversion of 7-carboxy-7-deazaguanine (CDG) to 7-cyano-7-deazaguanine (preQ(0)). The chain is 7-cyano-7-deazaguanine synthase from Neisseria meningitidis serogroup A / serotype 4A (strain DSM 15465 / Z2491).